The primary structure comprises 204 residues: FMN-dependent NADH:quinone oxidoreductase (204 aa).

FMN contacts are provided by residues serine 10, 15–17 (SLS), and 139–142 (TSGG).

It belongs to the azoreductase type 1 family. As to quaternary structure, homodimer. FMN serves as cofactor.

It catalyses the reaction 2 a quinone + NADH + H(+) = 2 a 1,4-benzosemiquinone + NAD(+). The catalysed reaction is N,N-dimethyl-1,4-phenylenediamine + anthranilate + 2 NAD(+) = 2-(4-dimethylaminophenyl)diazenylbenzoate + 2 NADH + 2 H(+). Its function is as follows. Quinone reductase that provides resistance to thiol-specific stress caused by electrophilic quinones. Functionally, also exhibits azoreductase activity. Catalyzes the reductive cleavage of the azo bond in aromatic azo compounds to the corresponding amines. This Rhizobium leguminosarum bv. trifolii (strain WSM2304) protein is FMN-dependent NADH:quinone oxidoreductase.